The sequence spans 333 residues: Anthranilate phosphoribosyltransferase (333 aa).

5-phospho-alpha-D-ribose 1-diphosphate is bound by residues G81, 84-85 (GD), T89, 91-94 (NIST), 109-117 (KHGNRSVSS), and A121. G81 serves as a coordination point for anthranilate. Mg(2+) is bound at residue S93. Position 112 (N112) interacts with anthranilate. R167 is a binding site for anthranilate. Residues D225 and E226 each contribute to the Mg(2+) site.

Belongs to the anthranilate phosphoribosyltransferase family. In terms of assembly, homodimer. Mg(2+) serves as cofactor.

It carries out the reaction N-(5-phospho-beta-D-ribosyl)anthranilate + diphosphate = 5-phospho-alpha-D-ribose 1-diphosphate + anthranilate. It participates in amino-acid biosynthesis; L-tryptophan biosynthesis; L-tryptophan from chorismate: step 2/5. Its function is as follows. Catalyzes the transfer of the phosphoribosyl group of 5-phosphorylribose-1-pyrophosphate (PRPP) to anthranilate to yield N-(5'-phosphoribosyl)-anthranilate (PRA). The polypeptide is Anthranilate phosphoribosyltransferase (Haemophilus influenzae (strain 86-028NP)).